The sequence spans 214 residues: Large ribosomal subunit protein uL3 (214 aa).

The disordered stretch occupies residues 133 to 154; that stretch reads GLGAGHGTQRKHRSPGSIGGCA.

Belongs to the universal ribosomal protein uL3 family. Part of the 50S ribosomal subunit. Forms a cluster with proteins L14 and L19.

Its function is as follows. One of the primary rRNA binding proteins, it binds directly near the 3'-end of the 23S rRNA, where it nucleates assembly of the 50S subunit. This chain is Large ribosomal subunit protein uL3, found in Streptomyces avermitilis (strain ATCC 31267 / DSM 46492 / JCM 5070 / NBRC 14893 / NCIMB 12804 / NRRL 8165 / MA-4680).